The primary structure comprises 368 residues: Quinolinate synthase (368 aa).

Residues histidine 46 and serine 63 each coordinate iminosuccinate. Cysteine 110 lines the [4Fe-4S] cluster pocket. Iminosuccinate is bound by residues 141–143 and serine 162; that span reads YVN. Cysteine 230 is a [4Fe-4S] cluster binding site. Iminosuccinate-binding positions include 256-258 and threonine 273; that span reads HPE. A [4Fe-4S] cluster-binding site is contributed by cysteine 320.

It belongs to the quinolinate synthase family. Type 3 subfamily. It depends on [4Fe-4S] cluster as a cofactor.

It localises to the cytoplasm. It carries out the reaction iminosuccinate + dihydroxyacetone phosphate = quinolinate + phosphate + 2 H2O + H(+). It participates in cofactor biosynthesis; NAD(+) biosynthesis; quinolinate from iminoaspartate: step 1/1. Functionally, catalyzes the condensation of iminoaspartate with dihydroxyacetone phosphate to form quinolinate. The sequence is that of Quinolinate synthase from Bacillus cereus (strain Q1).